The sequence spans 395 residues: NADH-quinone oxidoreductase subunit D (395 aa).

The protein belongs to the complex I 49 kDa subunit family. As to quaternary structure, NDH-1 is composed of 14 different subunits. Subunits NuoB, C, D, E, F, and G constitute the peripheral sector of the complex.

It is found in the cell inner membrane. The enzyme catalyses a quinone + NADH + 5 H(+)(in) = a quinol + NAD(+) + 4 H(+)(out). In terms of biological role, NDH-1 shuttles electrons from NADH, via FMN and iron-sulfur (Fe-S) centers, to quinones in the respiratory chain. The immediate electron acceptor for the enzyme in this species is believed to be a menaquinone. Couples the redox reaction to proton translocation (for every two electrons transferred, four hydrogen ions are translocated across the cytoplasmic membrane), and thus conserves the redox energy in a proton gradient. This Chlorobium luteolum (strain DSM 273 / BCRC 81028 / 2530) (Pelodictyon luteolum) protein is NADH-quinone oxidoreductase subunit D.